Reading from the N-terminus, the 424-residue chain is GDP-fucose protein O-fucosyltransferase 2 (424 aa).

An N-terminal signal peptide occupies residues 1-20; that stretch reads MHFFPIQLLVLFFAEKIAFA. Position 51–55 (51–55) interacts with GDP-beta-L-fucose; sequence GEGFN. The active-site Proton acceptor is the Glu52. An intrachain disulfide couples Cys154 to Cys187. Asn205 is a glycosylation site (N-linked (GlcNAc...) asparagine). Residues 288–290, Asp366, and 383–384 each bind GDP-beta-L-fucose; these read HWR and TF. Cys407 and Cys414 are disulfide-bonded.

This sequence belongs to the glycosyltransferase 68 family. As to expression, expressed in the anterior part of embryos, in the hypodermal and neuronal cells of the head. Expressed at different levels in a variety of cell types after hatching, including neuronal, hypodermal, muscle, intestinal, and somatic gonadal cells. Expressed in the nerve ring around the pharynx, in dorsal and ventral nerve cords, intestine, and a variety of hypodermal cells of L1-L3 larvae. Expressed in gonadal sheath cells, spermatheca, and tissues surrounding the vulva of adult hermaphrodites, and in the body wall muscle and hypodermal cells of adults of both sexes.

It localises to the endoplasmic reticulum. Its subcellular location is the golgi apparatus. The enzyme catalyses L-seryl-[protein] + GDP-beta-L-fucose = 3-O-(alpha-L-fucosyl)-L-seryl-[protein] + GDP + H(+). It catalyses the reaction L-threonyl-[protein] + GDP-beta-L-fucose = 3-O-(alpha-L-fucosyl)-L-threonyl-[protein] + GDP + H(+). It participates in protein modification; protein glycosylation. Its function is as follows. Catalyzes the reaction that attaches fucose through an O-glycosidic linkage to a conserved serine or threonine residue in the consensus sequence C1-X-X-S/T-C2 of thrombospondin type I repeats (TSRs) where C1 and C2 are the first and second cysteines of the repeat, respectively. O-fucosylates members of several protein families including the ADAMTS superfamily and the thrombospondin (TSP) and spondin families. This chain is GDP-fucose protein O-fucosyltransferase 2 (pad-2), found in Caenorhabditis elegans.